The sequence spans 387 residues: 2-alkyl-3-oxoalkanoate reductase (387 aa).

Catalysis depends on Tyr190, which acts as the Proton acceptor. Lys194 contacts NADP(+).

This sequence belongs to the 3-beta-HSD family.

The enzyme catalyses a (2R,3S)-2-alkyl-3-hydroxyalkanoate + NADP(+) = an (R)-2-alkyl-3-oxoalkanoate + NADPH + H(+). Its function is as follows. Involved in olefin biosynthesis. Catalyzes the reversible stereospecific NADPH-dependent reduction of 2-alkyl-3-oxoalkanoic acids to 2-alkyl-3-hydroxyalkanoic acids. The S.oneidensis oleABCD genes produce 3,6,9,12,15,19,22,25,28-hentriacontanonaene, which may aid the cells in adapting to a sudden drop in temperature. The sequence is that of 2-alkyl-3-oxoalkanoate reductase from Shewanella oneidensis (strain ATCC 700550 / JCM 31522 / CIP 106686 / LMG 19005 / NCIMB 14063 / MR-1).